We begin with the raw amino-acid sequence, 24 residues long: Brevinin-1BYb (24 aa).

Cysteine 18 and cysteine 24 form a disulfide bridge.

Expressed by the skin glands.

Its subcellular location is the secreted. Antibacterial activity against Gram-positive bacterium S.aureus and Gram-negative bacterium E.coli. Has moderate antifungal activity against C.albicans and strong hemolytic activity. The polypeptide is Brevinin-1BYb (Rana boylii (Foothill yellow-legged frog)).